A 247-amino-acid chain; its full sequence is Probable transcriptional regulatory protein PMT_1423 (247 aa).

It belongs to the TACO1 family.

It is found in the cytoplasm. In Prochlorococcus marinus (strain MIT 9313), this protein is Probable transcriptional regulatory protein PMT_1423.